The sequence spans 361 residues: MVWLVAMTSRQRSLCGLAAHGLWFLGLVLLMDATARPANHSFSRERAANRDENEIIPPDHLNGVKLEMDGHLNKDFHQEVFLGKDMDGFDEDSEPRRSRRKLMVIFSKVDVNTDRRISAKEMQHWIMEKTAEHFQEAVKENKLHFRAVDPDGDGHVSWDEYKVKFLASKGHNEREIADAIKNHEELKVDEETQEVLGNLRDRWYQADNPPADLLLTEDEFLSFLHPEHSRGMLKFMVKEIVRDLDQDGDKQLSLPEFISLPVGTVENQQGQDIDDNWVKDRKKEFEELIDSNHDGIVTMEELENYMDPMNEYNALNEAKQMIAIADENQNHHLEPEEILKYSEFFTGSKLMDYARNVHEEF.

Positions Met1–Ala35 are cleaved as a signal peptide. An N-linked (GlcNAc...) asparagine glycan is attached at Asn39. 2 EF-hand domains span residues Arg97–Glu132 and Glu136–His171. A Phosphoserine modification is found at Ser98. Residues Asp110, Asn112, Asp114, Arg116, Glu121, Asp149, Asp151, Asp153, His155, and Glu160 each coordinate Ca(2+). Position 192 is a phosphothreonine (Thr192). EF-hand domains are found at residues Leu196 to Gly231, Met232 to Asn267, Trp277 to Tyr312, and Asn313 to Ser348. Asp212 is a Ca(2+) binding site. At Thr216 the chain carries Phosphothreonine. Residues Glu219, Asp245, Asp247, Asp249, Gln251, and Glu256 each contribute to the Ca(2+) site. Residue Thr264 is modified to Phosphothreonine. Ca(2+) contacts are provided by Asp290, Asn292, and Asp294. Phosphothreonine is present on Thr298. Glu301, Asp326, Asn328, Asn330, His332, and Glu337 together coordinate Ca(2+). The segment at Pro308–Phe361 is necessary for intracellular retention in Golgi apparatus lumen.

This sequence belongs to the CREC family. In terms of assembly, a membrane-associated isoform interacts with STX3 and STXBP1. In terms of tissue distribution, a membrane-associated isoform is expressed in acini of the pancreas (at protein level). Ubiquitous.

Its subcellular location is the golgi apparatus lumen. Functionally, a membrane-associated isoform may be involved in the exocytosis of zymogens by pancreatic acini. May regulate calcium-dependent activities in the endoplasmic reticulum lumen or post-ER compartment. This Rattus norvegicus (Rat) protein is 45 kDa calcium-binding protein (Sdf4).